A 203-amino-acid chain; its full sequence is uncharacterized protein (203 aa).

Transmembrane regions (helical) follow at residues 9–29, 42–62, 86–106, and 126–146; these read YNVF…IVVA, FLFL…FFDV, SGVF…ALLV, and YPLL…SIGL. Composition is skewed to basic and acidic residues over residues 164-174 and 182-191; these read GEPTAADKTDS and DQTKSKKDGD. The segment at 164-203 is disordered; that stretch reads GEPTAADKTDSRPVVVDLDQTKSKKDGDNPPQASGDMTSL. A compositionally biased stretch (polar residues) spans 194–203; that stretch reads PQASGDMTSL.

The protein localises to the cell membrane. This is an uncharacterized protein from Mycoplasma pneumoniae (strain ATCC 29342 / M129 / Subtype 1) (Mycoplasmoides pneumoniae).